Reading from the N-terminus, the 210-residue chain is Uracil phosphoribosyltransferase (210 aa).

5-phospho-alpha-D-ribose 1-diphosphate-binding positions include Arg-80, Arg-105, and 132–140; that span reads DPMLATGGS. Uracil-binding positions include Ile-195 and 200-202; that span reads GDA. Residue Asp-201 participates in 5-phospho-alpha-D-ribose 1-diphosphate binding.

This sequence belongs to the UPRTase family. Requires Mg(2+) as cofactor.

It carries out the reaction UMP + diphosphate = 5-phospho-alpha-D-ribose 1-diphosphate + uracil. The protein operates within pyrimidine metabolism; UMP biosynthesis via salvage pathway; UMP from uracil: step 1/1. Allosterically activated by GTP. Functionally, catalyzes the conversion of uracil and 5-phospho-alpha-D-ribose 1-diphosphate (PRPP) to UMP and diphosphate. This Thermoanaerobacter pseudethanolicus (strain ATCC 33223 / 39E) (Clostridium thermohydrosulfuricum) protein is Uracil phosphoribosyltransferase.